An 82-amino-acid polypeptide reads, in one-letter code: Large ribosomal subunit protein uL23 (82 aa).

It belongs to the universal ribosomal protein uL23 family. As to quaternary structure, part of the 50S ribosomal subunit. Contacts protein L29.

Its function is as follows. Binds to 23S rRNA. One of the proteins that surrounds the polypeptide exit tunnel on the outside of the ribosome. The chain is Large ribosomal subunit protein uL23 from Natronomonas pharaonis (strain ATCC 35678 / DSM 2160 / CIP 103997 / JCM 8858 / NBRC 14720 / NCIMB 2260 / Gabara) (Halobacterium pharaonis).